An 83-amino-acid chain; its full sequence is MRLALLLLAILVATELVVSGKNPILQCMGNRGFCRSSCKKSEQAYFYCRTFQMCCLQSYVRISLTGVDDNTNWSYEKHWPRIP.

Residues 1 to 19 form the signal peptide; the sequence is MRLALLLLAILVATELVVS. Disulfide bonds link C27-C54, C34-C48, and C38-C55.

This sequence belongs to the beta-defensin family. Specifically expressed in male gonads (Sertoli cells).

The protein localises to the secreted. In terms of biological role, has antibacterial activity. In Mus musculus (Mouse), this protein is Beta-defensin 19 (Defb19).